We begin with the raw amino-acid sequence, 57 residues long: High light-inducible protein HliD (57 aa).

The Chlorophyll-binding motif signature appears at 25–30 (EKLNGR). A helical transmembrane segment spans residues 25–46 (EKLNGRAAMVGFLLILVIEYFT).

Belongs to the Hlip family. In terms of assembly, probably forms dimers which bind 6 chlorophyll a and 2 beta-carotenoid molecules. Cofractionates in an approximately 50 kDa fraction of the thylakoid membrane with HliC. Does not associate with mature PSII. Purified in several chlorophyll- and carotenoid-containing complexes, including photosystem II (PSII) assembly intermediate complex RCII* (iD1, D1, D2, PsbE, PsbF, PsbI, Ycf39, Ycf48, HliC and HliD) and the Ycf39-Hlip complex (Ycf39, HliC, HliD and pigments).

It is found in the cellular thylakoid membrane. Its function is as follows. Involved in photosystem II (PSII) assembly and/or repair under high light stress. Required for binding of chlorophyll and carotenoids by the Ycf39-Hlip complex. The Ycf39-Hlip complex binds D1 at an early stage of PSII assembly along with Ycf48, ribosomes and ChlG, the last enzyme in chlorophyll biosynthesis; it may be involved in chlorophyll reuse and delivery to D1 in the initial stages of PSII assembly. Binds chlorophyll a and beta-carotenoid in a 3:1 stoichiometry in the presence and absence of Yfc39; in the Ycf39-HliC-HliD complex, HliD binds all the pigment. The Ycf39-Hlip complex efficiently quenches chlorophyll fluorescence, contributing to photoprotection. Deletion of 4 to 5 members of the Hlip family suggests the proteins are involved in regulation of chlorophyll biosynthesis, in stabilization of chlorophyll-binding proteins and/or in reuse of chlorophylls, and may regulate tetrapyrrole biosynthesis. Might bind chlorophyll and/or carotenoids in association with HliC (called the ScpBE pair). The Hlips might regulate tetrapyrrole biosynthesis, maybe at the level of aminolevulinic acid synthesis and probably stabilize PSII assembly intermediates. The sequence is that of High light-inducible protein HliD (hliD) from Synechocystis sp. (strain ATCC 27184 / PCC 6803 / Kazusa).